Consider the following 408-residue polypeptide: Argininosuccinate synthase (408 aa).

Residues 16-24 (AYSGGLDTS) and Ala-44 contribute to the ATP site. Tyr-96 and Ser-101 together coordinate L-citrulline. Gly-126 provides a ligand contact to ATP. L-aspartate is bound by residues Thr-128, Asn-132, and Asp-133. Residue Asn-132 participates in L-citrulline binding. Residues Arg-136, Ser-185, Ser-194, Glu-270, and Tyr-282 each contribute to the L-citrulline site.

The protein belongs to the argininosuccinate synthase family. Type 1 subfamily. As to quaternary structure, homotetramer.

It localises to the cytoplasm. The catalysed reaction is L-citrulline + L-aspartate + ATP = 2-(N(omega)-L-arginino)succinate + AMP + diphosphate + H(+). It participates in amino-acid biosynthesis; L-arginine biosynthesis; L-arginine from L-ornithine and carbamoyl phosphate: step 2/3. This chain is Argininosuccinate synthase, found in Shewanella woodyi (strain ATCC 51908 / MS32).